We begin with the raw amino-acid sequence, 450 residues long: Glucose-6-phosphate isomerase (450 aa).

The residue at position 39 (Thr39) is a Phosphothreonine. Glu291 functions as the Proton donor in the catalytic mechanism. Catalysis depends on residues His312 and Lys426.

The protein belongs to the GPI family.

It is found in the cytoplasm. It carries out the reaction alpha-D-glucose 6-phosphate = beta-D-fructose 6-phosphate. It participates in carbohydrate biosynthesis; gluconeogenesis. It functions in the pathway carbohydrate degradation; glycolysis; D-glyceraldehyde 3-phosphate and glycerone phosphate from D-glucose: step 2/4. Catalyzes the reversible isomerization of glucose-6-phosphate to fructose-6-phosphate. In Bacillus cytotoxicus (strain DSM 22905 / CIP 110041 / 391-98 / NVH 391-98), this protein is Glucose-6-phosphate isomerase.